The chain runs to 205 residues: Imidazole glycerol phosphate synthase subunit HisH (205 aa).

Positions 1–205 (MIALVDYGGG…FFKMALGDKK (205 aa)) constitute a Glutamine amidotransferase type-1 domain. Cysteine 79 serves as the catalytic Nucleophile. Residues histidine 181 and glutamate 183 contribute to the active site.

As to quaternary structure, heterodimer of HisH and HisF.

It is found in the cytoplasm. The enzyme catalyses 5-[(5-phospho-1-deoxy-D-ribulos-1-ylimino)methylamino]-1-(5-phospho-beta-D-ribosyl)imidazole-4-carboxamide + L-glutamine = D-erythro-1-(imidazol-4-yl)glycerol 3-phosphate + 5-amino-1-(5-phospho-beta-D-ribosyl)imidazole-4-carboxamide + L-glutamate + H(+). The catalysed reaction is L-glutamine + H2O = L-glutamate + NH4(+). It functions in the pathway amino-acid biosynthesis; L-histidine biosynthesis; L-histidine from 5-phospho-alpha-D-ribose 1-diphosphate: step 5/9. Its function is as follows. IGPS catalyzes the conversion of PRFAR and glutamine to IGP, AICAR and glutamate. The HisH subunit catalyzes the hydrolysis of glutamine to glutamate and ammonia as part of the synthesis of IGP and AICAR. The resulting ammonia molecule is channeled to the active site of HisF. The protein is Imidazole glycerol phosphate synthase subunit HisH of Dehalococcoides mccartyi (strain CBDB1).